We begin with the raw amino-acid sequence, 340 residues long: MYG1 protein C27H6.8 (340 aa).

Belongs to the MYG1 family.

The chain is MYG1 protein C27H6.8 from Caenorhabditis elegans.